Consider the following 448-residue polypeptide: Bifunctional protein GlmU (448 aa).

The segment at 1–229 (MNNHTLNIII…NDEIQGINNL (229 aa)) is pyrophosphorylase. UDP-N-acetyl-alpha-D-glucosamine is bound by residues 11-14 (LAAG), Lys25, Gln76, 81-82 (GT), 103-105 (YGD), Gly140, Glu154, Asn169, and Asn227. Asp105 lines the Mg(2+) pocket. Residue Asn227 coordinates Mg(2+). Residues 230–250 (LQLVRAEKIYQKQQAKLLLLS) form a linker region. The segment at 251–448 (GIMIYNPSNF…NEKKQIHKKL (198 aa)) is N-acetyltransferase. Lys351 lines the UDP-N-acetyl-alpha-D-glucosamine pocket. The active-site Proton acceptor is the His363. Tyr366 and Asn377 together coordinate UDP-N-acetyl-alpha-D-glucosamine. Residues Ala380, 386 to 387 (NY), Ser405, and Ala423 each bind acetyl-CoA.

The protein in the N-terminal section; belongs to the N-acetylglucosamine-1-phosphate uridyltransferase family. It in the C-terminal section; belongs to the transferase hexapeptide repeat family. In terms of assembly, homotrimer. The cofactor is Mg(2+).

The protein resides in the cytoplasm. The catalysed reaction is alpha-D-glucosamine 1-phosphate + acetyl-CoA = N-acetyl-alpha-D-glucosamine 1-phosphate + CoA + H(+). It catalyses the reaction N-acetyl-alpha-D-glucosamine 1-phosphate + UTP + H(+) = UDP-N-acetyl-alpha-D-glucosamine + diphosphate. Its pathway is nucleotide-sugar biosynthesis; UDP-N-acetyl-alpha-D-glucosamine biosynthesis; N-acetyl-alpha-D-glucosamine 1-phosphate from alpha-D-glucosamine 6-phosphate (route II): step 2/2. The protein operates within nucleotide-sugar biosynthesis; UDP-N-acetyl-alpha-D-glucosamine biosynthesis; UDP-N-acetyl-alpha-D-glucosamine from N-acetyl-alpha-D-glucosamine 1-phosphate: step 1/1. It participates in bacterial outer membrane biogenesis; LPS lipid A biosynthesis. In terms of biological role, catalyzes the last two sequential reactions in the de novo biosynthetic pathway for UDP-N-acetylglucosamine (UDP-GlcNAc). The C-terminal domain catalyzes the transfer of acetyl group from acetyl coenzyme A to glucosamine-1-phosphate (GlcN-1-P) to produce N-acetylglucosamine-1-phosphate (GlcNAc-1-P), which is converted into UDP-GlcNAc by the transfer of uridine 5-monophosphate (from uridine 5-triphosphate), a reaction catalyzed by the N-terminal domain. This is Bifunctional protein GlmU from Buchnera aphidicola subsp. Baizongia pistaciae (strain Bp).